The following is a 131-amino-acid chain: D-ribose pyranase (131 aa).

Catalysis depends on His-20, which acts as the Proton donor. Substrate-binding positions include Asp-28, His-98, and 120 to 122 (YSN).

Belongs to the RbsD / FucU family. RbsD subfamily. As to quaternary structure, homodecamer.

The protein resides in the cytoplasm. It catalyses the reaction beta-D-ribopyranose = beta-D-ribofuranose. It participates in carbohydrate metabolism; D-ribose degradation; D-ribose 5-phosphate from beta-D-ribopyranose: step 1/2. In terms of biological role, catalyzes the interconversion of beta-pyran and beta-furan forms of D-ribose. The chain is D-ribose pyranase from Lactobacillus johnsonii (strain CNCM I-12250 / La1 / NCC 533).